The chain runs to 621 residues: Signal recognition particle receptor subunit alpha homolog (621 aa).

Positions 1 to 158 (MFDQLAVFTP…KKFEQYFRIK (158 aa)) are SRX. The segment at 167 to 217 (HINPDNFTKNGSVPQSHNKNTKKKLRDTKGKKQSTGNVGSGRKWGRDGGML) is disordered. Positions 171-183 (DNFTKNGSVPQSH) are enriched in polar residues. Residues 185 to 198 (KNTKKKLRDTKGKK) are compositionally biased toward basic residues. At S239 the chain carries Phosphoserine. The interval 398–620 (YVFSIVGVNG…SVKWAVNTLM (223 aa)) is NG domain. Residues 404-411 (GVNGVGKS) and 510-514 (DTAGR) each bind GTP. Residue S523 is modified to Phosphoserine. 572–575 (SKCD) provides a ligand contact to GTP.

This sequence belongs to the GTP-binding SRP family. As to quaternary structure, heterodimer of an alpha and a beta chain.

It is found in the endoplasmic reticulum membrane. Its function is as follows. Component of the SRP (signal recognition particle) receptor (SR). Ensures, in conjunction with the signal recognition particle, the correct targeting of the nascent secretory proteins to the endoplasmic reticulum membrane system. GTP hydrolysis may enhance the fidelity of and provide unidirectionality to the targeting reaction. It is important but not essential for cell growth. May be directly involved in mitochondrial protein import. This chain is Signal recognition particle receptor subunit alpha homolog (SRP101), found in Saccharomyces cerevisiae (strain ATCC 204508 / S288c) (Baker's yeast).